A 489-amino-acid polypeptide reads, in one-letter code: Cysteine--tRNA ligase (489 aa).

Position 27 (Cys-27) interacts with Zn(2+). Positions 29–39 (VTVYDLCHLGH) match the 'HIGH' region motif. 3 residues coordinate Zn(2+): Cys-211, His-236, and Glu-240. Residues 268–272 (KMSKS) carry the 'KMSKS' region motif. Residue Lys-271 participates in ATP binding.

It belongs to the class-I aminoacyl-tRNA synthetase family. As to quaternary structure, monomer. Zn(2+) serves as cofactor.

It is found in the cytoplasm. It carries out the reaction tRNA(Cys) + L-cysteine + ATP = L-cysteinyl-tRNA(Cys) + AMP + diphosphate. The polypeptide is Cysteine--tRNA ligase (Prochlorococcus marinus (strain AS9601)).